The sequence spans 170 residues: MNRNNPLEVLGHVSWLWASSPLHRNWPVSLFAINVLPAIRANQYALLTRDNYPVAYCSWANLSLENEIKYLNDVTSLVAEDWTSGDRKWFIVWIAPFGDNGALYKYMRKKFPDELFRAIRVDPKTHVGKVSEFHGGKIDKQLANKIFKQYHHELITEVKNKSDFNFSLTG.

H23 is an active-site residue. H151 contributes to the heme binding site.

It belongs to the RTX toxin acyltransferase family. As to quaternary structure, monomer. Post-translationally, proteolytically cleaved by the protease systems ClpAP, ClpXP and FtsH, leading to its degradation.

The protein resides in the cytoplasm. It catalyses the reaction tetradecanoyl-[ACP] + L-lysyl-[protein] = N(6)-tetradecanoyl-L-lysyl-[protein] + holo-[ACP] + H(+). Its activity is regulated as follows. The acyltransferase activity is inhibited by heme. Its function is as follows. Protein-lysine myristoyltransferase that catalyzes myristoylation of the protoxin (HlyA) at two internal lysine residues, thereby converting it to the active toxin. This chain is Protein-lysine myristoyltransferase HlyC, found in Escherichia coli.